A 412-amino-acid polypeptide reads, in one-letter code: Subtilisin-like protease 6 (412 aa).

The N-terminal stretch at 1–20 (MGFITKAIPIVLAALSTVNG) is a signal peptide. The propeptide occupies 21–127 (ARILEAGPHA…VRATTNGTNL (107 aa)). One can recognise an Inhibitor I9 domain in the interval 36 to 120 (KYIVVMKKDV…FIEPDFVVRA (85 aa)). N123 and N126 each carry an N-linked (GlcNAc...) asparagine glycan. Residues 135–412 (SWGLARVSTR…SKLIYNGSGK (278 aa)) enclose the Peptidase S8 domain. Catalysis depends on charge relay system residues D167 and H198. Residues N252, N264, and N325 are each glycosylated (N-linked (GlcNAc...) asparagine). S358 serves as the catalytic Charge relay system. N-linked (GlcNAc...) asparagine glycosylation is present at N408.

The protein belongs to the peptidase S8 family.

Its subcellular location is the secreted. In terms of biological role, secreted subtilisin-like serine protease with keratinolytic activity that contributes to pathogenicity. This Trichophyton verrucosum (Cattle ringworm fungus) protein is Subtilisin-like protease 6 (SUB6).